A 197-amino-acid polypeptide reads, in one-letter code: Nucleoid occlusion factor SlmA (197 aa).

The HTH tetR-type domain maps to 7-67 (INRREHILQC…GLIDFIEESL (61 aa)). The H-T-H motif DNA-binding region spans 30-49 (TTAKLAAEVGVSEAALYRHF).

This sequence belongs to the nucleoid occlusion factor SlmA family. As to quaternary structure, homodimer. Interacts with FtsZ.

It localises to the cytoplasm. Its subcellular location is the nucleoid. Functionally, required for nucleoid occlusion (NO) phenomenon, which prevents Z-ring formation and cell division over the nucleoid. Acts as a DNA-associated cell division inhibitor that binds simultaneously chromosomal DNA and FtsZ, and disrupts the assembly of FtsZ polymers. SlmA-DNA-binding sequences (SBS) are dispersed on non-Ter regions of the chromosome, preventing FtsZ polymerization at these regions. The chain is Nucleoid occlusion factor SlmA from Shewanella loihica (strain ATCC BAA-1088 / PV-4).